Consider the following 420-residue polypeptide: MVSRQEQFEQVQAVKKSINTASEEVKNQALLAMADHLVAATEEILAANALDMAAAKGKISDVMLDRLYLDADRIEAMARGIREVVALPDPIGEVLETSQLENGLVITKKRVAIGVIGIIYESRPNVTSDAAALTLKSGNAVVLRSGKDAYQTTHAIVTALKKGLETTTIHPNVIQLVEDTSRESSYAMMKAKGYLDLLIPRGGAGLINAVVENAIVPVIETGTGIVHVYVDKDADEDKALSIINNAKTSRPSVCNAMEVLLVHENKAASILPRLDQMLVAERKEAGLEPIQFRLDSKASQFVSGQAAETQDFDTEFLDYVLAVKVVSSLEEAVAHIESHSTHHSDAIVTENAEAAAYFTDQVDSAAVYVNASTRFTDGGQFGLGCEMGISTQKLHARGPMGLKELTSYKYVVAGDGQIRE.

The protein belongs to the gamma-glutamyl phosphate reductase family.

The protein localises to the cytoplasm. It carries out the reaction L-glutamate 5-semialdehyde + phosphate + NADP(+) = L-glutamyl 5-phosphate + NADPH + H(+). Its pathway is amino-acid biosynthesis; L-proline biosynthesis; L-glutamate 5-semialdehyde from L-glutamate: step 2/2. Its function is as follows. Catalyzes the NADPH-dependent reduction of L-glutamate 5-phosphate into L-glutamate 5-semialdehyde and phosphate. The product spontaneously undergoes cyclization to form 1-pyrroline-5-carboxylate. This Streptococcus pneumoniae (strain CGSP14) protein is Gamma-glutamyl phosphate reductase.